Consider the following 72-residue polypeptide: Large ribosomal subunit protein uL29 (72 aa).

It belongs to the universal ribosomal protein uL29 family.

This Thermodesulfovibrio yellowstonii (strain ATCC 51303 / DSM 11347 / YP87) protein is Large ribosomal subunit protein uL29.